The sequence spans 1068 residues: DNA-directed RNA polymerase subunit beta (1068 aa).

It belongs to the RNA polymerase beta chain family. As to quaternary structure, in plastids the minimal PEP RNA polymerase catalytic core is composed of four subunits: alpha, beta, beta', and beta''. When a (nuclear-encoded) sigma factor is associated with the core the holoenzyme is formed, which can initiate transcription.

The protein localises to the plastid. The protein resides in the chloroplast. It carries out the reaction RNA(n) + a ribonucleoside 5'-triphosphate = RNA(n+1) + diphosphate. Functionally, DNA-dependent RNA polymerase catalyzes the transcription of DNA into RNA using the four ribonucleoside triphosphates as substrates. The polypeptide is DNA-directed RNA polymerase subunit beta (Staurastrum punctulatum (Green alga)).